A 623-amino-acid polypeptide reads, in one-letter code: Chaperone protein HtpG (623 aa).

The tract at residues 1–336 (MVSKQQTMGF…ASDLPLNISR (336 aa)) is a; substrate-binding. The interval 337 to 550 (EILQDNKQVE…EQDMGLEMQR (214 aa)) is b. The segment at 551-623 (ILQAAGQQVP…NRVNRLLVSS (73 aa)) is c.

This sequence belongs to the heat shock protein 90 family. Homodimer.

The protein resides in the cytoplasm. Its function is as follows. Molecular chaperone. Has ATPase activity. In Legionella pneumophila subsp. pneumophila (strain Philadelphia 1 / ATCC 33152 / DSM 7513), this protein is Chaperone protein HtpG.